Consider the following 4558-residue polypeptide: Multifunctional-autoprocessing repeats-in-toxin (4558 aa).

The signal sequence occupies residues 1-32 (MVFYLIPKRRVWLMGKPFWRSVEYFFTGNYSA). 39 RtxA repeats span residues 114–131 (GAAG…GDVS), 134–151 (GAAA…GNVT), 154–170 (GAGG…QGNL), 174–197 (GAGA…GDVT), 200–217 (GAGA…GNIT), 220–237 (GAGA…GDIT), 268–285 (GVGG…GDIH), 288–304 (GGGA…GNDF), 594–611 (GAGG…GNVH), 614–630 (GGGI…FGNT), 634–651 (GGGA…GDLT), 654–668 (GAGL…SEQG), 751–763 (AGGA…MGEG), 769–781 (MLGG…HISN), 792–808 (ALGG…GNTL), 811–826 (MGGG…DGTT), 830–845 (MVGG…NGDT), 851–865 (GVGN…GQTL), 868–885 (MGAA…TSIA), 887–901 (MIGA…GEGN), 906–920 (MGGL…GNGD), 925–942 (MVAE…MSVA), 944–960 (MLAK…GTTL), 982–994 (MIGQ…KVGN), 1001–1016 (MVGK…DGTS), 1041–1053 (GKAN…GDGL), 1077–1089 (AAAK…HVGD), 1097–1112 (AGKG…GTTV), 1120–1132 (GNVM…GTTI), 1135–1152 (AKGK…LGVN), 1155–1169 (WGQA…DGDR), 1173–1189 (AKGE…GQEV), 1194–1209 (GEAN…DDYT), 1211–1227 (AWGK…GQNV), 1230–1246 (AKGE…GDSF), 1252–1266 (KGNI…MQVT), 1268–1285 (AKGQ…LNVT), 1306–1323 (AWGK…LNVA), and 1325–1342 (MKGK…LNIN). 3 disordered regions span residues 1623 to 1688 (HATQ…KEES), 1752 to 1779 (TLSD…QNRA), and 1791 to 1890 (DAEK…NADG). Residues 1625-1634 (TQNPAAQNAL) show a composition bias toward polar residues. Residues 1635 to 1654 (SDKERAEADRQRLEQEKQKQ) show a composition bias toward basic and acidic residues. Over residues 1660-1679 (GSQSQLESTDQQALENNGQA) the composition is skewed to polar residues. The span at 1791–1815 (DAEKRKADALAKGKDAQQAESDAHH) shows a compositional bias: basic and acidic residues. Positions 1879–1888 (HVNTDSQTNA) are enriched in polar residues. Positions 1988–2422 (VPGFKSHFAS…HAEQWAKITA (435 aa)) constitute an ACD domain. 1999-2003 (SIGIE) is an ATP binding site. The Mg(2+) site is built by E2003, E2065, and Q2149. Residue R2255 coordinates ATP. Position 2326 (E2326) interacts with Mg(2+). Residues 2574 to 2658 (ELMSVTELLD…SLLNQVNTRL (85 aa)) form a membrane localization region (MLD) region. The segment at 2734–3098 (EYGQTVADTI…HQVTDVLDAL (365 aa)) is rho inactivation domain (RID). Residues 3195–3310 (VVLFLHGSGS…MPSMTKAITA (116 aa)) form an ABH effector region region. The segment at 3404–3426 (ASVDEDLDQQGLDTTSTKDQGIS) is disordered. The span at 3414–3426 (GLDTTSTKDQGIS) shows a compositional bias: polar residues. The region spanning 3462 to 3646 (PTTDGGETRF…AENNKVSLSW (185 aa)) is the Peptidase C80 domain. 1D-myo-inositol hexakisphosphate-binding positions include 3468-3470 (ETR), 3495-3496 (KH), and R3526. Residue H3532 is the For cysteine protease activity of the active site. S3577 serves as a coordination point for 1D-myo-inositol hexakisphosphate. The active-site Nucleophile; for cysteine protease activity is the C3581. 1D-myo-inositol hexakisphosphate is bound by residues 3610–3612 (SVR), 3623–3624 (RK), K3636, and K3641.

The cofactor is Mg(2+).

It is found in the secreted. The protein localises to the host cytoplasm. The protein resides in the host cytosol. Its subcellular location is the host cell membrane. The catalysed reaction is L-lysyl-/S-(2E,6E,10E)-geranylgeranyl-L-cysteinyl-[protein] + hexadecanoyl-CoA = N(6)-hexadecanoyl-L-lysyl-/S-(2E,6E,10E)-geranylgeranyl-L-cysteinyl-[protein] + CoA + H(+). It catalyses the reaction L-lysyl-/S-(2E,6E,10E)-geranylgeranyl-L-cysteinyl-[protein] + dodecanoyl-CoA = N(6)-dodecanoyl-L-lysyl-/S-(2E,6E,10E)-geranylgeranyl-L-cysteinyl-[protein] + CoA + H(+). It carries out the reaction L-lysyl-/S-(2E,6E,10E)-geranylgeranyl-L-cysteinyl-[protein] + decanoyl-CoA = N(6)-decanoyl-L-lysyl-/S-(2E,6E,10E)-geranylgeranyl-L-cysteinyl-[protein] + CoA + H(+). Its activity is regulated as follows. Protease activity is inhibited by N-ethylmaleimide but not other protease inhibitors. Protease activity is inhibited by aza-leucine epoxide. Protease activity is activated upon binding inositol hexakisphosphate (InsP6) via an allosteric mechanism: the active site is disordered or occluded in the absence of InsP6, protecting the protease active-site sulfhydryl until the toxin enters a eukaryotic cell. Upon processing at the Leu-3441-Ala-3442 site, the peptidase C80 domain is converted to a form with much reduced affinity for InsP6, but is reactivated for high affinity binding of InsP6 by cooperative binding of both a new substrate and InsP6. Reactivation allows cleavage at other sites, specifically at Leu residues between the effector domains. In terms of biological role, precursor of a multifunctional toxin that causes destruction of the actin cytoskeleton by covalent cross-linking of actin and inactivation of Rho GTPases when translocated into the host cytoplasm. Upon translocation into the host cell, undergoes autoprocessing in cis mediated by the peptidase C80 domain (also named CPD domain): the protease activity is activated upon binding inositol hexakisphosphate (InsP6) present at the host cell membrane and delivers the Cysteine protease domain-containing toxin F3 chain to the host cytosol. The Cysteine protease domain-containing toxin F3 chain will then further cleave and release effector toxin chains that cause disassembly of the actin cytoskeleton and enhance V.cholerae colonization of the small intestine, possibly by facilitating evasion of phagocytic cells. Following autocatalytic cleavage in cis at the Leu-3441-Ala-3442 site, this chain mediates processing in trans to release other individual toxin chains to the host cytosol. Released effector toxin chains cause disassembly of the actin cytoskeleton and enhance V.cholerae colonization of the small intestine, possibly by facilitating evasion of phagocytic cells. Its function is as follows. Actin-directed toxin that catalyzes the covalent cross-linking of host cytoplasmic monomeric actin. Mediates the cross-link between 'Lys-50' of one monomer and 'Glu-270' of another actin monomer, resulting in formation of highly toxic actin oligomers that cause cell rounding. The toxin can be highly efficient at very low concentrations by acting on formin homology family proteins: toxic actin oligomers bind with high affinity to formins and adversely affect both nucleation and elongation abilities of formins, causing their potent inhibition in both profilin-dependent and independent manners. Acts as an acid--amino-acid ligase that transfers the gamma-phosphoryl group of ATP to the 'Glu-270' actin residue, resulting in the formation of an activated acyl phosphate intermediate. This intermediate is further hydrolyzed and the energy of hydrolysis is utilized for the formation of the amide bond between actin subunits. Functionally, N-epsilon-fatty acyltransferase that mediates lysine-palmitoylation of host Rho GTPase proteins, with a strong preference for host Rac1. After delivery to the host cytosol, localizes to the host cell membrane where it palmitoylates host Rho GTPase proteins, resulting in loss of all active GTP-bound Rho and subsequent actin depolymerization. Prenylation of host Rac1 at the C-terminus is required for lysine-palmitoylation. In terms of biological role, indirectly activates the small GTPase CDC42. This Vibrio cholerae serotype O1 (strain ATCC 39315 / El Tor Inaba N16961) protein is Multifunctional-autoprocessing repeats-in-toxin.